The primary structure comprises 421 residues: 4-hydroxy-3-methylbut-2-en-1-yl diphosphate synthase (flavodoxin) (421 aa).

[4Fe-4S] cluster contacts are provided by cysteine 311, cysteine 314, cysteine 357, and glutamate 364.

Belongs to the IspG family. It depends on [4Fe-4S] cluster as a cofactor.

The catalysed reaction is (2E)-4-hydroxy-3-methylbut-2-enyl diphosphate + oxidized [flavodoxin] + H2O + 2 H(+) = 2-C-methyl-D-erythritol 2,4-cyclic diphosphate + reduced [flavodoxin]. It participates in isoprenoid biosynthesis; isopentenyl diphosphate biosynthesis via DXP pathway; isopentenyl diphosphate from 1-deoxy-D-xylulose 5-phosphate: step 5/6. Converts 2C-methyl-D-erythritol 2,4-cyclodiphosphate (ME-2,4cPP) into 1-hydroxy-2-methyl-2-(E)-butenyl 4-diphosphate. In Xanthomonas campestris pv. campestris (strain 8004), this protein is 4-hydroxy-3-methylbut-2-en-1-yl diphosphate synthase (flavodoxin).